The sequence spans 209 residues: Cytidylate kinase (209 aa).

ATP is bound at residue 7–15; it reads GVAASGKSS.

It belongs to the cytidylate kinase family. Type 1 subfamily.

It localises to the cytoplasm. It catalyses the reaction CMP + ATP = CDP + ADP. The enzyme catalyses dCMP + ATP = dCDP + ADP. The sequence is that of Cytidylate kinase from Deinococcus geothermalis (strain DSM 11300 / CIP 105573 / AG-3a).